The chain runs to 151 residues: Small ribosomal subunit protein uS15z (151 aa).

This sequence belongs to the universal ribosomal protein uS15 family.

This chain is Small ribosomal subunit protein uS15z, found in Oryza sativa subsp. japonica (Rice).